Reading from the N-terminus, the 286-residue chain is Shikimate dehydrogenase (NADP(+)) (286 aa).

Shikimate-binding positions include 20–22 (SLS) and Ser-67. Lys-71 functions as the Proton acceptor in the catalytic mechanism. Asn-92 and Asp-107 together coordinate shikimate. NADP(+) contacts are provided by residues 131–135 (GGGGA) and Ala-230. Tyr-232 serves as a coordination point for shikimate. Gly-253 lines the NADP(+) pocket.

Belongs to the shikimate dehydrogenase family. In terms of assembly, homodimer.

It catalyses the reaction shikimate + NADP(+) = 3-dehydroshikimate + NADPH + H(+). The protein operates within metabolic intermediate biosynthesis; chorismate biosynthesis; chorismate from D-erythrose 4-phosphate and phosphoenolpyruvate: step 4/7. Involved in the biosynthesis of the chorismate, which leads to the biosynthesis of aromatic amino acids. Catalyzes the reversible NADPH linked reduction of 3-dehydroshikimate (DHSA) to yield shikimate (SA). The chain is Shikimate dehydrogenase (NADP(+)) from Lactococcus lactis subsp. lactis (strain IL1403) (Streptococcus lactis).